A 341-amino-acid polypeptide reads, in one-letter code: Arfaptin-2 (341 aa).

A disordered region spans residues 46–84 (NETSIVSGGYGGSGDGLIPTGSGRHPSHSTSPSGPGDEV). A compositionally biased stretch (low complexity) spans 65-81 (TGSGRHPSHSTSPSGPG). S72 carries the phosphoserine modification. An AH domain is found at 121 to 321 (TVDLELELQI…NQKQLEQTLQ (201 aa)).

As to quaternary structure, forms homodimers or heterodimers with ARFIP1. Interacts with RAC1. Specifically binds to GTP-bound ARF1 and ARF6, but binds to RAC1.GTP and RAC1.GDP with similar affinities. Interacts with ARL1. Interacts (via N-terminus) with IKBKB and IKBKG; these interactions inhibit activation of NF-kappa-B.

It localises to the golgi apparatus. Its subcellular location is the trans-Golgi network membrane. Plays a role in constitutive metalloproteinase (MMP) secretion from the trans Golgi network. May have important functions during vesicle biogenesis at certain cargo subdomains, which could be predominantly utilized by secreted MMPs, such as MMP7 and MMP2. Also involved in autophagy by regulating the starvation-dependent trafficking of ATG9A vesicles which deliver the phosphatidylinositol 4-kinase beta (PI4KB) to the autophagosome initiation site. Involved in phagophore growth during mitophagy by regulating ATG9A trafficking to mitochondria. In addition, plays a role in NF-kappa-B inhibition by interacting with IKBKB and IKBKG. This Mus musculus (Mouse) protein is Arfaptin-2.